The following is a 424-amino-acid chain: Histidine--tRNA ligase (424 aa).

The protein belongs to the class-II aminoacyl-tRNA synthetase family. Homodimer.

It localises to the cytoplasm. It carries out the reaction tRNA(His) + L-histidine + ATP = L-histidyl-tRNA(His) + AMP + diphosphate + H(+). This is Histidine--tRNA ligase from Sodalis glossinidius (strain morsitans).